Reading from the N-terminus, the 311-residue chain is Lipoyl synthase (311 aa).

Cys36, Cys41, Cys47, Cys66, Cys70, Cys73, and Ser280 together coordinate [4Fe-4S] cluster. The Radical SAM core domain maps to 51 to 269 (RDGPGTATFM…RVAESEFGFL (219 aa)).

The protein belongs to the radical SAM superfamily. Lipoyl synthase family. Requires [4Fe-4S] cluster as cofactor.

The protein resides in the cytoplasm. The catalysed reaction is [[Fe-S] cluster scaffold protein carrying a second [4Fe-4S](2+) cluster] + N(6)-octanoyl-L-lysyl-[protein] + 2 oxidized [2Fe-2S]-[ferredoxin] + 2 S-adenosyl-L-methionine + 4 H(+) = [[Fe-S] cluster scaffold protein] + N(6)-[(R)-dihydrolipoyl]-L-lysyl-[protein] + 4 Fe(3+) + 2 hydrogen sulfide + 2 5'-deoxyadenosine + 2 L-methionine + 2 reduced [2Fe-2S]-[ferredoxin]. It functions in the pathway protein modification; protein lipoylation via endogenous pathway; protein N(6)-(lipoyl)lysine from octanoyl-[acyl-carrier-protein]: step 2/2. Its function is as follows. Catalyzes the radical-mediated insertion of two sulfur atoms into the C-6 and C-8 positions of the octanoyl moiety bound to the lipoyl domains of lipoate-dependent enzymes, thereby converting the octanoylated domains into lipoylated derivatives. The protein is Lipoyl synthase of Halobacterium salinarum (strain ATCC 29341 / DSM 671 / R1).